The following is a 392-amino-acid chain: Formate-dependent phosphoribosylglycinamide formyltransferase (392 aa).

N(1)-(5-phospho-beta-D-ribosyl)glycinamide is bound by residues 15–16 (EL) and E75. ATP is bound by residues R107, K148, 153 to 158 (SSGKGQ), 188 to 191 (EEFL), and E196. One can recognise an ATP-grasp domain in the interval 112–302 (DLASEELALL…EFELHLRAVL (191 aa)). Mg(2+)-binding residues include E261 and E273. Residues D280, K350, and 357-358 (RR) each bind N(1)-(5-phospho-beta-D-ribosyl)glycinamide.

It belongs to the PurK/PurT family. In terms of assembly, homodimer.

The enzyme catalyses N(1)-(5-phospho-beta-D-ribosyl)glycinamide + formate + ATP = N(2)-formyl-N(1)-(5-phospho-beta-D-ribosyl)glycinamide + ADP + phosphate + H(+). It functions in the pathway purine metabolism; IMP biosynthesis via de novo pathway; N(2)-formyl-N(1)-(5-phospho-D-ribosyl)glycinamide from N(1)-(5-phospho-D-ribosyl)glycinamide (formate route): step 1/1. Its function is as follows. Involved in the de novo purine biosynthesis. Catalyzes the transfer of formate to 5-phospho-ribosyl-glycinamide (GAR), producing 5-phospho-ribosyl-N-formylglycinamide (FGAR). Formate is provided by PurU via hydrolysis of 10-formyl-tetrahydrofolate. The protein is Formate-dependent phosphoribosylglycinamide formyltransferase of Prochlorococcus marinus (strain MIT 9303).